The following is a 39-amino-acid chain: Cytochrome b559 subunit beta (39 aa).

Residues 14–30 traverse the membrane as a helical segment; the sequence is WLAVHGLAVPTVFFLGA. Position 18 (H18) interacts with heme.

This sequence belongs to the PsbE/PsbF family. In terms of assembly, heterodimer of an alpha subunit and a beta subunit. PSII is composed of 1 copy each of membrane proteins PsbA, PsbB, PsbC, PsbD, PsbE, PsbF, PsbH, PsbI, PsbJ, PsbK, PsbL, PsbM, PsbT, PsbX, PsbY, PsbZ, Psb30/Ycf12, at least 3 peripheral proteins of the oxygen-evolving complex and a large number of cofactors. It forms dimeric complexes. Heme b is required as a cofactor.

The protein localises to the plastid. It localises to the chloroplast thylakoid membrane. Its function is as follows. This b-type cytochrome is tightly associated with the reaction center of photosystem II (PSII). PSII is a light-driven water:plastoquinone oxidoreductase that uses light energy to abstract electrons from H(2)O, generating O(2) and a proton gradient subsequently used for ATP formation. It consists of a core antenna complex that captures photons, and an electron transfer chain that converts photonic excitation into a charge separation. The polypeptide is Cytochrome b559 subunit beta (Physcomitrium patens (Spreading-leaved earth moss)).